Consider the following 890-residue polypeptide: uncharacterized protein (890 aa).

A signal peptide spans 1–20; that stretch reads MKILKSLVLLVLFMAMPAKA. The next 6 helical transmembrane spans lie at 518–538, 567–587, 613–633, 651–671, 684–704, and 775–795; these read AALTLYVTIFGLMFVAGALKL, TYFFSAFTNGIDFFVTNVVGA, LLFIELLQIHNGLAFIAIITI, VIAFIGLTVMISLAPFFIILM, ISTLLSYVVQPTILLIFFLLI, and FLVLFTTALLFYSYCLMSYGL. Residues 860-890 are disordered; it reads KARKPEGGEHTNKFLAERNDVPKKEEGERKE. Positions 862–890 are enriched in basic and acidic residues; the sequence is RKPEGGEHTNKFLAERNDVPKKEEGERKE.

Belongs to the TrbL/VirB6 family.

The protein resides in the cell membrane. This is an uncharacterized protein from Rickettsia felis (strain ATCC VR-1525 / URRWXCal2) (Rickettsia azadi).